The following is a 366-amino-acid chain: Carbamoyl phosphate synthase small chain (366 aa).

The segment at 1-171 (MLERRYLVLE…KTPYVSTGSD (171 aa)) is CPSase. Residues Ser-47, Gly-221, and Gly-223 each contribute to the L-glutamine site. One can recognise a Glutamine amidotransferase type-1 domain in the interval 173–360 (SVVLLDFGKK…MTMMKEFKEK (188 aa)). Cys-248 (nucleophile) is an active-site residue. L-glutamine-binding residues include Leu-249, Gln-252, Asn-290, Gly-292, and Tyr-293. Active-site residues include His-333 and Glu-335.

This sequence belongs to the CarA family. Composed of two chains; the small (or glutamine) chain promotes the hydrolysis of glutamine to ammonia, which is used by the large (or ammonia) chain to synthesize carbamoyl phosphate. Tetramer of heterodimers (alpha,beta)4.

The enzyme catalyses hydrogencarbonate + L-glutamine + 2 ATP + H2O = carbamoyl phosphate + L-glutamate + 2 ADP + phosphate + 2 H(+). It catalyses the reaction L-glutamine + H2O = L-glutamate + NH4(+). The protein operates within amino-acid biosynthesis; L-arginine biosynthesis; carbamoyl phosphate from bicarbonate: step 1/1. Its pathway is pyrimidine metabolism; UMP biosynthesis via de novo pathway; (S)-dihydroorotate from bicarbonate: step 1/3. Functionally, small subunit of the glutamine-dependent carbamoyl phosphate synthetase (CPSase). CPSase catalyzes the formation of carbamoyl phosphate from the ammonia moiety of glutamine, carbonate, and phosphate donated by ATP, constituting the first step of 2 biosynthetic pathways, one leading to arginine and/or urea and the other to pyrimidine nucleotides. The small subunit (glutamine amidotransferase) binds and cleaves glutamine to supply the large subunit with the substrate ammonia. This Staphylococcus haemolyticus (strain JCSC1435) protein is Carbamoyl phosphate synthase small chain.